The following is a 399-amino-acid chain: Elongation factor Tu (399 aa).

The 200-residue stretch at 10–209 (KPHVNVGTIG…EVDKYIPTPQ (200 aa)) folds into the tr-type G domain. The G1 stretch occupies residues 19–26 (GHVDHGKT). Residue 19 to 26 (GHVDHGKT) participates in GTP binding. Residue Thr-26 participates in Mg(2+) binding. Residues 60 to 64 (GITIA) form a G2 region. The tract at residues 81–84 (DCPG) is G3. Residues 81–85 (DCPGH) and 136–139 (NKQD) each bind GTP. Positions 136 to 139 (NKQD) are G4. Residues 174–176 (SAL) are G5.

Belongs to the TRAFAC class translation factor GTPase superfamily. Classic translation factor GTPase family. EF-Tu/EF-1A subfamily. Monomer.

It localises to the cytoplasm. The enzyme catalyses GTP + H2O = GDP + phosphate + H(+). In terms of biological role, GTP hydrolase that promotes the GTP-dependent binding of aminoacyl-tRNA to the A-site of ribosomes during protein biosynthesis. The polypeptide is Elongation factor Tu (Helicobacter hepaticus (strain ATCC 51449 / 3B1)).